Consider the following 301-residue polypeptide: LHMIHLHWYQYPPMNPMMYPLLLIFMLFTGILCLAGNFVTIWVFMNTKSLRTPANLLVVNLAMSDFLMMFTMFPPMMVTCYYHTWTLGPTFCQVYAFLGNLCGCASIWTMVFITFDRYNVIVKGVAGEPLSNKKAAMWILSVWVLSTAWCMAPFFGWNSYVPEGNLTGCGTDYLSEDILSRSYLYIYSTWVYFLPLTITIYCYVFIIKAVAAHEKGMRDQAKKMGIKSLRNEEAQKTSAECRLAKIAMTTVALWFIAWTPYLLINWVGMFARSYLSPVYTIWGYVFAKANAVYNPIVYAIS.

Residues 1-18 (LHMIHLHWYQYPPMNPMM) are Extracellular-facing. Residues 19–43 (YPLLLIFMLFTGILCLAGNFVTIWV) traverse the membrane as a helical segment. Residues 44–55 (FMNTKSLRTPAN) are Cytoplasmic-facing. The helical transmembrane segment at 56-78 (LLVVNLAMSDFLMMFTMFPPMMV) threads the bilayer. At 79–92 (TCYYHTWTLGPTFC) the chain is on the extracellular side. Cys92 and Cys169 are oxidised to a cystine. The helical transmembrane segment at 93–115 (QVYAFLGNLCGCASIWTMVFITF) threads the bilayer. The 'Ionic lock' involved in activated form stabilization signature appears at 116–118 (DRY). The Cytoplasmic segment spans residues 116–134 (DRYNVIVKGVAGEPLSNKK). Residues 135–155 (AAMWILSVWVLSTAWCMAPFF) traverse the membrane as a helical segment. Topologically, residues 156 to 182 (GWNSYVPEGNLTGCGTDYLSEDILSRS) are extracellular. The N-linked (GlcNAc...) asparagine glycan is linked to Asn165. The helical transmembrane segment at 183 to 204 (YLYIYSTWVYFLPLTITIYCYV) threads the bilayer. Topologically, residues 205–245 (FIIKAVAAHEKGMRDQAKKMGIKSLRNEEAQKTSAECRLAK) are cytoplasmic. A helical membrane pass occupies residues 246-267 (IAMTTVALWFIAWTPYLLINWV). Residues 268–278 (GMFARSYLSPV) lie on the Extracellular side of the membrane. Residues 279–300 (YTIWGYVFAKANAVYNPIVYAI) form a helical membrane-spanning segment. Lys288 bears the N6-(retinylidene)lysine mark.

The protein belongs to the G-protein coupled receptor 1 family. Opsin subfamily. Homodimer. Interacts with GNAQ. Post-translationally, contains one covalently linked retinal chromophore.

The protein localises to the cell projection. It localises to the rhabdomere membrane. Its function is as follows. Photoreceptor required for image-forming vision at low light intensity. Can use both retinal and 3-dehydroretinal as visual pigment. Light-induced isomerization of 11-cis to all-trans retinal triggers a conformational change that activates signaling via G-proteins. Signaling via GNAQ probably mediates the activation of phospholipase C. The protein is Rhodopsin (RHO) of Faxonius virilis (Virile crayfish).